The chain runs to 156 residues: Transcription elongation factor GreA (156 aa).

Positions 44-67 (ENAEYEAAKEKQAMIEGRIQDLCQ) form a coiled coil.

It belongs to the GreA/GreB family.

Necessary for efficient RNA polymerase transcription elongation past template-encoded arresting sites. The arresting sites in DNA have the property of trapping a certain fraction of elongating RNA polymerases that pass through, resulting in locked ternary complexes. Cleavage of the nascent transcript by cleavage factors such as GreA or GreB allows the resumption of elongation from the new 3'terminus. GreA releases sequences of 2 to 3 nucleotides. This is Transcription elongation factor GreA from Syntrophobacter fumaroxidans (strain DSM 10017 / MPOB).